A 447-amino-acid chain; its full sequence is ATP-dependent protease ATPase subunit HslU (447 aa).

ATP-binding positions include Ile18, 60 to 65 (GVGKTE), Asp259, Glu325, and Arg397.

This sequence belongs to the ClpX chaperone family. HslU subfamily. As to quaternary structure, a double ring-shaped homohexamer of HslV is capped on each side by a ring-shaped HslU homohexamer. The assembly of the HslU/HslV complex is dependent on binding of ATP.

It is found in the cytoplasm. Its function is as follows. ATPase subunit of a proteasome-like degradation complex; this subunit has chaperone activity. The binding of ATP and its subsequent hydrolysis by HslU are essential for unfolding of protein substrates subsequently hydrolyzed by HslV. HslU recognizes the N-terminal part of its protein substrates and unfolds these before they are guided to HslV for hydrolysis. This Burkholderia lata (strain ATCC 17760 / DSM 23089 / LMG 22485 / NCIMB 9086 / R18194 / 383) protein is ATP-dependent protease ATPase subunit HslU.